Here is a 149-residue protein sequence, read N- to C-terminus: Endoribonuclease YbeY (149 aa).

Zn(2+)-binding residues include histidine 115, histidine 119, and histidine 125.

The protein belongs to the endoribonuclease YbeY family. Requires Zn(2+) as cofactor.

The protein resides in the cytoplasm. Single strand-specific metallo-endoribonuclease involved in late-stage 70S ribosome quality control and in maturation of the 3' terminus of the 16S rRNA. This is Endoribonuclease YbeY from Mycoplasmopsis pulmonis (strain UAB CTIP) (Mycoplasma pulmonis).